The primary structure comprises 500 residues: NAD(P)H-quinone oxidoreductase chain 4, chloroplastic (500 aa).

14 consecutive transmembrane segments (helical) span residues 4 to 24 (FPWL…IFFL), 35 to 55 (YTIA…CYHF), 87 to 107 (LGSI…AWPV), 111 to 131 (SQLF…LFSS), 134 to 154 (LLLF…LLSM), 167 to 187 (FILY…GMGL), 211 to 231 (ILLY…IPLH), 242 to 262 (HYST…YGLI), 272 to 292 (AHYL…IYAA), 313 to 333 (MGFI…GAIL), 334 to 354 (QILS…TACD), 386 to 406 (LALP…GLIT), 417 to 437 (LITF…LSML), and 462 to 482 (LFLL…PDFV).

It belongs to the complex I subunit 4 family.

Its subcellular location is the plastid. The protein resides in the chloroplast thylakoid membrane. The enzyme catalyses a plastoquinone + NADH + (n+1) H(+)(in) = a plastoquinol + NAD(+) + n H(+)(out). The catalysed reaction is a plastoquinone + NADPH + (n+1) H(+)(in) = a plastoquinol + NADP(+) + n H(+)(out). This is NAD(P)H-quinone oxidoreductase chain 4, chloroplastic from Saccharum officinarum (Sugarcane).